The primary structure comprises 199 residues: Acireductone dioxygenase 3 (199 aa).

Fe(2+)-binding residues include His99, His101, Glu105, and His144. His99, His101, Glu105, and His144 together coordinate Ni(2+).

Belongs to the acireductone dioxygenase (ARD) family. The cofactor is Fe(2+). It depends on Ni(2+) as a cofactor.

Its subcellular location is the cytoplasm. It is found in the nucleus. The catalysed reaction is 1,2-dihydroxy-5-(methylsulfanyl)pent-1-en-3-one + O2 = 4-methylsulfanyl-2-oxobutanoate + formate + 2 H(+). It catalyses the reaction 1,2-dihydroxy-5-(methylsulfanyl)pent-1-en-3-one + O2 = 3-(methylsulfanyl)propanoate + CO + formate + 2 H(+). The protein operates within amino-acid biosynthesis; L-methionine biosynthesis via salvage pathway; L-methionine from S-methyl-5-thio-alpha-D-ribose 1-phosphate: step 5/6. Catalyzes 2 different reactions between oxygen and the acireductone 1,2-dihydroxy-3-keto-5-methylthiopentene (DHK-MTPene) depending upon the metal bound in the active site. Fe-containing acireductone dioxygenase (Fe-ARD) produces formate and 2-keto-4-methylthiobutyrate (KMTB), the alpha-ketoacid precursor of methionine in the methionine recycle pathway. Ni-containing acireductone dioxygenase (Ni-ARD) produces methylthiopropionate, carbon monoxide and formate, and does not lie on the methionine recycle pathway. The sequence is that of Acireductone dioxygenase 3 (ARD3) from Arabidopsis thaliana (Mouse-ear cress).